Reading from the N-terminus, the 363-residue chain is NAD(P)H-quinone oxidoreductase subunit 1, chloroplastic (363 aa).

Transmembrane regions (helical) follow at residues 27–47 (VWLL…VLVI), 104–124 (IAVI…HLVL), 127–147 (LSIG…GLLM), 248–268 (YSGI…LVSS), 300–320 (VFGM…FLFI), and 343–363 (FLLP…LFSL).

It belongs to the complex I subunit 1 family. NDH is composed of at least 16 different subunits, 5 of which are encoded in the nucleus.

It is found in the plastid. Its subcellular location is the chloroplast thylakoid membrane. It carries out the reaction a plastoquinone + NADH + (n+1) H(+)(in) = a plastoquinol + NAD(+) + n H(+)(out). The catalysed reaction is a plastoquinone + NADPH + (n+1) H(+)(in) = a plastoquinol + NADP(+) + n H(+)(out). NDH shuttles electrons from NAD(P)H:plastoquinone, via FMN and iron-sulfur (Fe-S) centers, to quinones in the photosynthetic chain and possibly in a chloroplast respiratory chain. The immediate electron acceptor for the enzyme in this species is believed to be plastoquinone. Couples the redox reaction to proton translocation, and thus conserves the redox energy in a proton gradient. The polypeptide is NAD(P)H-quinone oxidoreductase subunit 1, chloroplastic (Ranunculus macranthus (Large buttercup)).